Consider the following 853-residue polypeptide: Replication protein A 70 kDa DNA-binding subunit C (853 aa).

Residues Pro118–Pro282 are disordered. Polar residues-rich tracts occupy residues Ser124–Gln144, Ser159–Asp173, Ser180–Asp194, Ser201–His211, Pro222–Ala249, and Thr263–Pro278. Positions Trp312 to Ala399 form a DNA-binding region, OB. The C4-type zinc-finger motif lies at Cys602–Cys628.

The protein belongs to the replication factor A protein 1 family. As to quaternary structure, heterotrimer of RPA1, RPA2 and RPA3 (canonical replication protein A complex).

The protein resides in the nucleus. Its function is as follows. Component of the replication protein A complex (RPA) required for DNA recombination, repair and replication. The activity of RPA is mediated by single-stranded DNA binding and protein interactions. Probably involved in repair of double-strand DNA breaks (DSBs) induced by genotoxic stresses. This is Replication protein A 70 kDa DNA-binding subunit C (RPA1C) from Arabidopsis thaliana (Mouse-ear cress).